A 187-amino-acid chain; its full sequence is Ribosome-recycling factor (187 aa).

It belongs to the RRF family.

It is found in the cytoplasm. Responsible for the release of ribosomes from messenger RNA at the termination of protein biosynthesis. May increase the efficiency of translation by recycling ribosomes from one round of translation to another. The chain is Ribosome-recycling factor from Ruegeria sp. (strain TM1040) (Silicibacter sp.).